A 211-amino-acid polypeptide reads, in one-letter code: LexA repressor (211 aa).

Residues 31–51 constitute a DNA-binding region (H-T-H motif); the sequence is RAEISKELGFRSPNAAEEHLK. Catalysis depends on for autocatalytic cleavage activity residues Ser127 and Lys164.

Belongs to the peptidase S24 family. Homodimer.

The enzyme catalyses Hydrolysis of Ala-|-Gly bond in repressor LexA.. Its function is as follows. Represses a number of genes involved in the response to DNA damage (SOS response), including recA and lexA. In the presence of single-stranded DNA, RecA interacts with LexA causing an autocatalytic cleavage which disrupts the DNA-binding part of LexA, leading to derepression of the SOS regulon and eventually DNA repair. This Pasteurella multocida (strain Pm70) protein is LexA repressor.